A 127-amino-acid polypeptide reads, in one-letter code: Glycine cleavage system H protein (127 aa).

Residues 24–105 (TALVGITDFA…YNEGWIVKMK (82 aa)) form the Lipoyl-binding domain. N6-lipoyllysine is present on lysine 65.

The protein belongs to the GcvH family. As to quaternary structure, the glycine cleavage system is composed of four proteins: P, T, L and H. The cofactor is (R)-lipoate.

Functionally, the glycine cleavage system catalyzes the degradation of glycine. The H protein shuttles the methylamine group of glycine from the P protein to the T protein. The sequence is that of Glycine cleavage system H protein from Chlorobaculum tepidum (strain ATCC 49652 / DSM 12025 / NBRC 103806 / TLS) (Chlorobium tepidum).